A 38-amino-acid chain; its full sequence is Beta-defensin 8 (38 aa).

Intrachain disulfides connect Cys7-Cys36, Cys14-Cys29, and Cys19-Cys37.

The protein belongs to the beta-defensin family. In terms of tissue distribution, neutrophilic granules.

It localises to the secreted. In terms of biological role, has bactericidal activity. Active against E.coli ML35 and S.aureus 502A. The chain is Beta-defensin 8 (DEFB8) from Bos taurus (Bovine).